The sequence spans 121 residues: Prefoldin subunit beta (121 aa).

This sequence belongs to the prefoldin subunit beta family. Heterohexamer of two alpha and four beta subunits.

The protein resides in the cytoplasm. In terms of biological role, molecular chaperone capable of stabilizing a range of proteins. Seems to fulfill an ATP-independent, HSP70-like function in archaeal de novo protein folding. The sequence is that of Prefoldin subunit beta from Caldivirga maquilingensis (strain ATCC 700844 / DSM 13496 / JCM 10307 / IC-167).